Consider the following 334-residue polypeptide: Protein-methionine-sulfoxide reductase catalytic subunit MsrP (334 aa).

Residues 1-44 constitute a signal peptide (tat-type signal); it reads MKKIRPLTEADVTAESAFFMQRRQVLKALGISAAALSLPSTAQA. Mo-molybdopterin-binding positions include N88, 91 to 92, C146, T181, N233, R238, and 249 to 251; these read YE and GIK.

It belongs to the MsrP family. In terms of assembly, heterodimer of a catalytic subunit (MsrP) and a heme-binding subunit (MsrQ). It depends on Mo-molybdopterin as a cofactor. Post-translationally, predicted to be exported by the Tat system. The position of the signal peptide cleavage has not been experimentally proven.

The protein resides in the periplasm. The catalysed reaction is L-methionyl-[protein] + a quinone + H2O = L-methionyl-(S)-S-oxide-[protein] + a quinol. It carries out the reaction L-methionyl-[protein] + a quinone + H2O = L-methionyl-(R)-S-oxide-[protein] + a quinol. Part of the MsrPQ system that repairs oxidized periplasmic proteins containing methionine sulfoxide residues (Met-O), using respiratory chain electrons. Thus protects these proteins from oxidative-stress damage caused by reactive species of oxygen and chlorine generated by the host defense mechanisms. MsrPQ is essential for the maintenance of envelope integrity under bleach stress, rescuing a wide series of structurally unrelated periplasmic proteins from methionine oxidation, including the primary periplasmic chaperone SurA and the lipoprotein Pal. The catalytic subunit MsrP is non-stereospecific, being able to reduce both (R-) and (S-) diastereoisomers of methionine sulfoxide. This Salmonella agona (strain SL483) protein is Protein-methionine-sulfoxide reductase catalytic subunit MsrP.